Here is a 61-residue protein sequence, read N- to C-terminus: Large ribosomal subunit protein bL28 (61 aa).

The tract at residues 1 to 26 (MAKDFINGKRTQFGNKRSHALNSSRR) is disordered. The segment covering 9-25 (KRTQFGNKRSHALNSSR) has biased composition (polar residues).

Belongs to the bacterial ribosomal protein bL28 family.

The polypeptide is Large ribosomal subunit protein bL28 (Limosilactobacillus reuteri (strain DSM 20016) (Lactobacillus reuteri)).